A 207-amino-acid polypeptide reads, in one-letter code: Ciliary microtubule-associated protein 3 (207 aa).

Interacts with proteins involved in ciliary transport, including ARL13B, CETN1, KIF3A, RAB6A, RAB8A, TUBB1 and TUBG1. Interacts with AURKA. In terms of tissue distribution, expressed in tissues rich in ciliated cells, such as lung, kidney, vas deferens and testis. Both isoforms 1 and 2 are expressed in testis.

It localises to the golgi apparatus. The protein localises to the golgi stack. Its subcellular location is the trans-Golgi network. It is found in the nucleus. The protein resides in the cytoplasm. It localises to the cytoplasmic vesicle. During primary cilia disassembly, involved in cilia disassembly. Required specifically to control cilia retraction as well as the liberation and duplication of the basal body/centrosome. May act by stimulating AURKA activity at the basal body in a cell cycle-dependent manner. The protein is Ciliary microtubule-associated protein 3 (Cimap3) of Mus musculus (Mouse).